A 132-amino-acid chain; its full sequence is MDFYRILVICIHVYTRLVFAPLKKDLKLLRLISLCIPIIRPFSFLIYPPPKSFSPLNSILPSILPIIPFAISSSLLFSYTFHVFYRFLFQPLLSVPYANSKQTNCLLVASFVYLPYRSPLPVVIEIMVQRYL.

A run of 3 helical transmembrane segments spans residues 28 to 48 (LLRL…LIYP), 59 to 79 (ILPS…LFSY), and 106 to 126 (LLVA…VIEI).

The protein localises to the membrane. This is an uncharacterized protein from Schizosaccharomyces pombe (strain 972 / ATCC 24843) (Fission yeast).